We begin with the raw amino-acid sequence, 1428 residues long: Gag-Pol polyprotein (1428 aa).

The N-myristoyl glycine; by host moiety is linked to residue glycine 2. The interaction with Gp41 stretch occupies residues 7–31 (VLSGKKLDSWEKIRLRPGGNKKYRL). Residues 8–43 (LSGKKLDSWEKIRLRPGGNKKYRLKHLVWASRELEK) are interaction with host CALM1. Residues 12–19 (KLDSWEKI) form an interaction with host AP3D1 region. The segment at 14 to 33 (DSWEKIRLRPGGNKKYRLKH) is interaction with membrane phosphatidylinositol 4,5-bisphosphate and RNA. The short motif at 16 to 22 (WEKIRLR) is the Nuclear export signal element. The short motif at 26-32 (NKKYRLK) is the Nuclear localization signal element. The interaction with membrane phosphatidylinositol 4,5-bisphosphate stretch occupies residues 73–77 (EELRS). A disordered region spans residues 108 to 130 (QNKNKQRTQQAAANTGSSQNYPI). The span at 114–130 (RTQQAAANTGSSQNYPI) shows a compositional bias: polar residues. At tyrosine 128 the chain carries Phosphotyrosine; by host. The segment at 185-223 (NVVGGHQAAMQMLKDTINEEAAEWDRLHPVHAGPIPPGQ) is interaction with human PPIA/CYPA and NUP153. The interval 273–359 (YSPVSILDIR…GGPGHKARVL (87 aa)) is dimerization/Multimerization of capsid protein p24. 2 consecutive CCHC-type zinc fingers follow at residues 384–401 (IKCF…NCRA) and 405–422 (KGCW…DCTE). The segment at 438–475 (EAREFSSEQTRANSPTSRNLWDGGKDDLPCETGAERQG) is disordered. Positions 444 to 456 (SEQTRANSPTSRN) are enriched in polar residues. The segment covering 460–475 (GGKDDLPCETGAERQG) has biased composition (basic and acidic residues). The tract at residues 482–486 (PQITL) is dimerization of protease. The Peptidase A2 domain occupies 501 to 570 (IEALLDTGAD…TPVNIIGRNM (70 aa)). The active-site For protease activity; shared with dimeric partner is the aspartate 506. Dimerization of protease stretches follow at residues 530 to 536 (GIGGFIK) and 569 to 581 (NMLT…LNFP). One can recognise a Reverse transcriptase domain in the interval 624–814 (EGKISKIGPE…PPFLWMGYEL (191 aa)). Mg(2+)-binding residues include aspartate 690, aspartate 765, and aspartate 766. The tract at residues 807–815 (FLWMGYELH) is RT 'primer grip'. A Tryptophan repeat motif motif is present at residues 978-994 (WEAWWMEYWQATWIPEW). One can recognise an RNase H type-1 domain in the interval 1014–1137 (IAGAETFYVD…VDKLVSSGIR (124 aa)). Aspartate 1023, glutamate 1058, aspartate 1078, and aspartate 1129 together coordinate Mg(2+). An Integrase-type zinc finger spans residues 1143–1184 (DGIDKAQEDHEKYHCNWRAMASDFNLPPVVAKEIVASCNKCQ). Zn(2+)-binding residues include histidine 1152, histidine 1156, cysteine 1180, and cysteine 1183. Residues 1194–1344 (VDCSPGIWQL…SAGERIIDII (151 aa)) enclose the Integrase catalytic domain. Positions 1204, 1256, and 1292 each coordinate Mg(2+). Positions 1363-1410 (FRVYYRDSRDPIWKGPAKLLWKGEGAVVIQDNSDIKVVPRRKAKIIRD) form a DNA-binding region, integrase-type.

Homotrimer; further assembles as hexamers of trimers. Interacts with gp41 (via C-terminus). Interacts with host CALM1; this interaction induces a conformational change in the Matrix protein, triggering exposure of the myristate group. Interacts with host AP3D1; this interaction allows the polyprotein trafficking to multivesicular bodies during virus assembly. Part of the pre-integration complex (PIC) which is composed of viral genome, matrix protein, Vpr and integrase. As to quaternary structure, homodimer; the homodimer further multimerizes as homohexamers or homopentamers. Interacts with human PPIA/CYPA; This interaction stabilizes the capsid. Interacts with human NUP153. Interacts with host PDZD8; this interaction stabilizes the capsid. Interacts with monkey TRIM5; this interaction destabilizes the capsid. In terms of assembly, homodimer, whose active site consists of two apposed aspartic acid residues. Heterodimer of p66 RT and p51 RT (RT p66/p51). Heterodimerization of RT is essential for DNA polymerase activity. The overall folding of the subdomains is similar in p66 RT and p51 RT but the spatial arrangements of the subdomains are dramatically different. As to quaternary structure, homotetramer; may further associate as a homohexadecamer. Part of the pre-integration complex (PIC) which is composed of viral genome, matrix protein, Vpr and integrase. Interacts with human SMARCB1/INI1 and human PSIP1/LEDGF isoform 1. Interacts with human KPNA3; this interaction might play a role in nuclear import of the pre-integration complex. Interacts with human NUP153; this interaction might play a role in nuclear import of the pre-integration complex. The cofactor is Mg(2+). Specific enzymatic cleavages by the viral protease yield mature proteins. The protease is released by autocatalytic cleavage. The polyprotein is cleaved during and after budding, this process is termed maturation. Proteolytic cleavage of p66 RT removes the RNase H domain to yield the p51 RT subunit. Nucleocapsid protein p7 might be further cleaved after virus entry. Post-translationally, tyrosine phosphorylated presumably in the virion by a host kinase. Phosphorylation is apparently not a major regulator of membrane association. In terms of processing, phosphorylated possibly by host MAPK1; this phosphorylation is necessary for Pin1-mediated virion uncoating. Methylated by host PRMT6, impairing its function by reducing RNA annealing and the initiation of reverse transcription.

Its subcellular location is the host cell membrane. It localises to the host endosome. The protein localises to the host multivesicular body. It is found in the virion membrane. The protein resides in the host nucleus. Its subcellular location is the host cytoplasm. It localises to the virion. The enzyme catalyses Specific for a P1 residue that is hydrophobic, and P1' variable, but often Pro.. It carries out the reaction Endohydrolysis of RNA in RNA/DNA hybrids. Three different cleavage modes: 1. sequence-specific internal cleavage of RNA. Human immunodeficiency virus type 1 and Moloney murine leukemia virus enzymes prefer to cleave the RNA strand one nucleotide away from the RNA-DNA junction. 2. RNA 5'-end directed cleavage 13-19 nucleotides from the RNA end. 3. DNA 3'-end directed cleavage 15-20 nucleotides away from the primer terminus.. The catalysed reaction is 3'-end directed exonucleolytic cleavage of viral RNA-DNA hybrid.. It catalyses the reaction DNA(n) + a 2'-deoxyribonucleoside 5'-triphosphate = DNA(n+1) + diphosphate. Its activity is regulated as follows. Protease: The viral protease is inhibited by many synthetic protease inhibitors (PIs), such as amprenavir, atazanavir, indinavir, loprinavir, nelfinavir, ritonavir and saquinavir. Use of protease inhibitors in tritherapy regimens permit more ambitious therapeutic strategies. Reverse transcriptase/ribonuclease H: RT can be inhibited either by nucleoside RT inhibitors (NRTIs) or by non nucleoside RT inhibitors (NNRTIs). NRTIs act as chain terminators, whereas NNRTIs inhibit DNA polymerization by binding a small hydrophobic pocket near the RT active site and inducing an allosteric change in this region. Classical NRTIs are abacavir, adefovir (PMEA), didanosine (ddI), lamivudine (3TC), stavudine (d4T), tenofovir (PMPA), zalcitabine (ddC), and zidovudine (AZT). Classical NNRTIs are atevirdine (BHAP U-87201E), delavirdine, efavirenz (DMP-266), emivirine (I-EBU), and nevirapine (BI-RG-587). The tritherapies used as a basic effective treatment of AIDS associate two NRTIs and one NNRTI. Its function is as follows. Mediates, with Gag polyprotein, the essential events in virion assembly, including binding the plasma membrane, making the protein-protein interactions necessary to create spherical particles, recruiting the viral Env proteins, and packaging the genomic RNA via direct interactions with the RNA packaging sequence (Psi). Gag-Pol polyprotein may regulate its own translation, by the binding genomic RNA in the 5'-UTR. At low concentration, the polyprotein would promote translation, whereas at high concentration, the polyprotein would encapsidate genomic RNA and then shut off translation. Targets the polyprotein to the plasma membrane via a multipartite membrane-binding signal, that includes its myristoylated N-terminus. Matrix protein is part of the pre-integration complex. Implicated in the release from host cell mediated by Vpu. Binds to RNA. Functionally, forms the conical core that encapsulates the genomic RNA-nucleocapsid complex in the virion. Most core are conical, with only 7% tubular. The core is constituted by capsid protein hexamer subunits. The core is disassembled soon after virion entry. Host restriction factors such as TRIM5-alpha or TRIMCyp bind retroviral capsids and cause premature capsid disassembly, leading to blocks in reverse transcription. Capsid restriction by TRIM5 is one of the factors which restricts HIV-1 to the human species. Host PIN1 apparently facilitates the virion uncoating. On the other hand, interactions with PDZD8 or CYPA stabilize the capsid. In terms of biological role, encapsulates and protects viral dimeric unspliced genomic RNA (gRNA). Binds these RNAs through its zinc fingers. Acts as a nucleic acid chaperone which is involved in rearangement of nucleic acid secondary structure during gRNA retrotranscription. Also facilitates template switch leading to recombination. As part of the polyprotein, participates in gRNA dimerization, packaging, tRNA incorporation and virion assembly. Its function is as follows. Aspartyl protease that mediates proteolytic cleavages of Gag and Gag-Pol polyproteins during or shortly after the release of the virion from the plasma membrane. Cleavages take place as an ordered, step-wise cascade to yield mature proteins. This process is called maturation. Displays maximal activity during the budding process just prior to particle release from the cell. Also cleaves Nef and Vif, probably concomitantly with viral structural proteins on maturation of virus particles. Hydrolyzes host EIF4GI and PABP1 in order to shut off the capped cellular mRNA translation. The resulting inhibition of cellular protein synthesis serves to ensure maximal viral gene expression and to evade host immune response. Also mediates cleavage of host YTHDF3. Mediates cleavage of host CARD8, thereby activating the CARD8 inflammasome, leading to the clearance of latent HIV-1 in patient CD4(+) T-cells after viral reactivation; in contrast, HIV-1 can evade CARD8-sensing when its protease remains inactive in infected cells prior to viral budding. Multifunctional enzyme that converts the viral RNA genome into dsDNA in the cytoplasm, shortly after virus entry into the cell. This enzyme displays a DNA polymerase activity that can copy either DNA or RNA templates, and a ribonuclease H (RNase H) activity that cleaves the RNA strand of RNA-DNA heteroduplexes in a partially processive 3' to 5' endonucleasic mode. Conversion of viral genomic RNA into dsDNA requires many steps. A tRNA(3)-Lys binds to the primer-binding site (PBS) situated at the 5'-end of the viral RNA. RT uses the 3' end of the tRNA primer to perform a short round of RNA-dependent minus-strand DNA synthesis. The reading proceeds through the U5 region and ends after the repeated (R) region which is present at both ends of viral RNA. The portion of the RNA-DNA heteroduplex is digested by the RNase H, resulting in a ssDNA product attached to the tRNA primer. This ssDNA/tRNA hybridizes with the identical R region situated at the 3' end of viral RNA. This template exchange, known as minus-strand DNA strong stop transfer, can be either intra- or intermolecular. RT uses the 3' end of this newly synthesized short ssDNA to perform the RNA-dependent minus-strand DNA synthesis of the whole template. RNase H digests the RNA template except for two polypurine tracts (PPTs) situated at the 5'-end and near the center of the genome. It is not clear if both polymerase and RNase H activities are simultaneous. RNase H probably can proceed both in a polymerase-dependent (RNA cut into small fragments by the same RT performing DNA synthesis) and a polymerase-independent mode (cleavage of remaining RNA fragments by free RTs). Secondly, RT performs DNA-directed plus-strand DNA synthesis using the PPTs that have not been removed by RNase H as primers. PPTs and tRNA primers are then removed by RNase H. The 3' and 5' ssDNA PBS regions hybridize to form a circular dsDNA intermediate. Strand displacement synthesis by RT to the PBS and PPT ends produces a blunt ended, linear dsDNA copy of the viral genome that includes long terminal repeats (LTRs) at both ends. Functionally, catalyzes viral DNA integration into the host chromosome, by performing a series of DNA cutting and joining reactions. This enzyme activity takes place after virion entry into a cell and reverse transcription of the RNA genome in dsDNA. The first step in the integration process is 3' processing. This step requires a complex comprising the viral genome, matrix protein, Vpr and integrase. This complex is called the pre-integration complex (PIC). The integrase protein removes 2 nucleotides from each 3' end of the viral DNA, leaving recessed CA OH's at the 3' ends. In the second step, the PIC enters cell nucleus. This process is mediated through integrase and Vpr proteins, and allows the virus to infect a non dividing cell. This ability to enter the nucleus is specific of lentiviruses, other retroviruses cannot and rely on cell division to access cell chromosomes. In the third step, termed strand transfer, the integrase protein joins the previously processed 3' ends to the 5' ends of strands of target cellular DNA at the site of integration. The 5'-ends are produced by integrase-catalyzed staggered cuts, 5 bp apart. A Y-shaped, gapped, recombination intermediate results, with the 5'-ends of the viral DNA strands and the 3' ends of target DNA strands remaining unjoined, flanking a gap of 5 bp. The last step is viral DNA integration into host chromosome. This involves host DNA repair synthesis in which the 5 bp gaps between the unjoined strands are filled in and then ligated. Since this process occurs at both cuts flanking the HIV genome, a 5 bp duplication of host DNA is produced at the ends of HIV-1 integration. Alternatively, Integrase may catalyze the excision of viral DNA just after strand transfer, this is termed disintegration. In Human immunodeficiency virus type 1 group M subtype A (isolate U455) (HIV-1), this protein is Gag-Pol polyprotein (gag-pol).